Consider the following 262-residue polypeptide: Hydroxyethylthiazole kinase (262 aa).

Methionine 50 is a binding site for substrate. ATP-binding residues include arginine 125 and threonine 171. Glycine 198 contacts substrate.

Belongs to the Thz kinase family. It depends on Mg(2+) as a cofactor.

The enzyme catalyses 5-(2-hydroxyethyl)-4-methylthiazole + ATP = 4-methyl-5-(2-phosphooxyethyl)-thiazole + ADP + H(+). The protein operates within cofactor biosynthesis; thiamine diphosphate biosynthesis; 4-methyl-5-(2-phosphoethyl)-thiazole from 5-(2-hydroxyethyl)-4-methylthiazole: step 1/1. Functionally, catalyzes the phosphorylation of the hydroxyl group of 4-methyl-5-beta-hydroxyethylthiazole (THZ). The protein is Hydroxyethylthiazole kinase of Escherichia coli O157:H7.